A 614-amino-acid polypeptide reads, in one-letter code: Dihydroxy-acid dehydratase 1 (614 aa).

Aspartate 81 is a Mg(2+) binding site. Cysteine 122 serves as a coordination point for [2Fe-2S] cluster. Residues aspartate 123 and lysine 124 each coordinate Mg(2+). Lysine 124 is subject to N6-carboxylysine. Cysteine 195 is a binding site for [2Fe-2S] cluster. Glutamate 491 lines the Mg(2+) pocket. Catalysis depends on serine 517, which acts as the Proton acceptor.

This sequence belongs to the IlvD/Edd family. In terms of assembly, homodimer. [2Fe-2S] cluster serves as cofactor. The cofactor is Mg(2+).

It carries out the reaction (2R)-2,3-dihydroxy-3-methylbutanoate = 3-methyl-2-oxobutanoate + H2O. The enzyme catalyses (2R,3R)-2,3-dihydroxy-3-methylpentanoate = (S)-3-methyl-2-oxopentanoate + H2O. It participates in amino-acid biosynthesis; L-isoleucine biosynthesis; L-isoleucine from 2-oxobutanoate: step 3/4. It functions in the pathway amino-acid biosynthesis; L-valine biosynthesis; L-valine from pyruvate: step 3/4. In terms of biological role, functions in the biosynthesis of branched-chain amino acids. Catalyzes the dehydration of (2R,3R)-2,3-dihydroxy-3-methylpentanoate (2,3-dihydroxy-3-methylvalerate) into 2-oxo-3-methylpentanoate (2-oxo-3-methylvalerate) and of (2R)-2,3-dihydroxy-3-methylbutanoate (2,3-dihydroxyisovalerate) into 2-oxo-3-methylbutanoate (2-oxoisovalerate), the penultimate precursor to L-isoleucine and L-valine, respectively. This Mesorhizobium japonicum (strain LMG 29417 / CECT 9101 / MAFF 303099) (Mesorhizobium loti (strain MAFF 303099)) protein is Dihydroxy-acid dehydratase 1.